The sequence spans 220 residues: Coat protein (220 aa).

Belongs to the potexvirus capsid protein family.

Its subcellular location is the virion. Required for genome encapsidation. Forms ribonucleoprotein complexes along with TGB1 helicase and viral RNA. The sequence is that of Coat protein from Cattleya (Nun's hood orchid).